The primary structure comprises 461 residues: Porin AaxA (461 aa).

Residues 1 to 22 (MSFRSVLLTALLSLSFTTTMQA) form the signal peptide.

The protein belongs to the OprB family.

Its subcellular location is the cell outer membrane. Facilitates L-arginine uptake, as part of the AaxABC system. The arginine uptake by the bacterium in the macrophage may be a virulence factor against the host innate immune response. This chain is Porin AaxA (aaxA), found in Chlamydia trachomatis serovar A (strain ATCC VR-571B / DSM 19440 / HAR-13).